The following is a 356-amino-acid chain: GTPase HflX (356 aa).

A Hflx-type G domain is found at 180–356 (PSIGIVGYTN…KIYQLATQLS (177 aa)). GTP contacts are provided by residues 186 to 193 (GYTNSGKT), 211 to 215 (FTTMS), 232 to 235 (DTVG), 300 to 303 (NKID), and 334 to 336 (SAL). Residues T193 and T213 each coordinate Mg(2+).

The protein belongs to the TRAFAC class OBG-HflX-like GTPase superfamily. HflX GTPase family. As to quaternary structure, monomer. Associates with the 50S ribosomal subunit. Does not associate with 70S ribosomes. Mg(2+) serves as cofactor.

Its subcellular location is the cytoplasm. With respect to regulation, GTPase activity is stimulated by the presence of 50S ribosomal subunits. Hydrolysis is probably regulated by the HflX N-terminal domain. GTPase that associates with the 50S ribosomal subunit and may have a role during protein synthesis or ribosome biogenesis. Specific for GTP. The chain is GTPase HflX from Saccharolobus solfataricus (strain ATCC 35092 / DSM 1617 / JCM 11322 / P2) (Sulfolobus solfataricus).